The primary structure comprises 230 residues: Ribonuclease 3 (230 aa).

The region spanning Asp-10 to Ser-133 is the RNase III domain. Glu-46 provides a ligand contact to Mg(2+). The active site involves Asp-50. The Mg(2+) site is built by Asp-119 and Glu-122. The active site involves Glu-122. A DRBM domain is found at Asp-161 to Gln-230.

Belongs to the ribonuclease III family. Homodimer. Mg(2+) is required as a cofactor.

It localises to the cytoplasm. It catalyses the reaction Endonucleolytic cleavage to 5'-phosphomonoester.. Functionally, digests double-stranded RNA. Involved in the processing of primary rRNA transcript to yield the immediate precursors to the large and small rRNAs (23S and 16S). Processes some mRNAs, and tRNAs when they are encoded in the rRNA operon. Processes pre-crRNA and tracrRNA of type II CRISPR loci if present in the organism. In Acinetobacter baumannii (strain AB307-0294), this protein is Ribonuclease 3 (rnc).